Reading from the N-terminus, the 128-residue chain is Azurin (128 aa).

The Plastocyanin-like domain maps to 1–128 (AECKVTVDST…SMMKGTVTVK (128 aa)). A disulfide bridge connects residues Cys3 and Cys26. Residues His46, Cys112, His117, and Met121 each contribute to the Cu cation site.

It is found in the periplasm. In terms of biological role, transfers electrons from cytochrome c551 to cytochrome oxidase. The protein is Azurin of Pseudomonas fluorescens biotype A.